The sequence spans 462 residues: Glutamate--tRNA ligase (462 aa).

The 'HIGH' region motif lies at 11–21; sequence PSPTGFIHLGN. The segment covering 120-131 has biased composition (basic and acidic residues); it reads KPRYDGTWRPEP. The segment at 120-140 is disordered; the sequence is KPRYDGTWRPEPGKTLPPIPA. The 'KMSKS' region motif lies at 243-247; the sequence is KMSKR. Lys246 contacts ATP.

This sequence belongs to the class-I aminoacyl-tRNA synthetase family. Glutamate--tRNA ligase type 1 subfamily. As to quaternary structure, monomer.

It localises to the cytoplasm. It catalyses the reaction tRNA(Glu) + L-glutamate + ATP = L-glutamyl-tRNA(Glu) + AMP + diphosphate. Its function is as follows. Catalyzes the attachment of glutamate to tRNA(Glu) in a two-step reaction: glutamate is first activated by ATP to form Glu-AMP and then transferred to the acceptor end of tRNA(Glu). The polypeptide is Glutamate--tRNA ligase (Polaromonas sp. (strain JS666 / ATCC BAA-500)).